Reading from the N-terminus, the 156-residue chain is ATP synthase subunit b (156 aa).

Residues 7 to 26 (LIGQAIWFALFIWITMKYVW) traverse the membrane as a helical segment.

It belongs to the ATPase B chain family. As to quaternary structure, F-type ATPases have 2 components, F(1) - the catalytic core - and F(0) - the membrane proton channel. F(1) has five subunits: alpha(3), beta(3), gamma(1), delta(1), epsilon(1). F(0) has three main subunits: a(1), b(2) and c(10-14). The alpha and beta chains form an alternating ring which encloses part of the gamma chain. F(1) is attached to F(0) by a central stalk formed by the gamma and epsilon chains, while a peripheral stalk is formed by the delta and b chains.

The protein resides in the cell inner membrane. Functionally, f(1)F(0) ATP synthase produces ATP from ADP in the presence of a proton or sodium gradient. F-type ATPases consist of two structural domains, F(1) containing the extramembraneous catalytic core and F(0) containing the membrane proton channel, linked together by a central stalk and a peripheral stalk. During catalysis, ATP synthesis in the catalytic domain of F(1) is coupled via a rotary mechanism of the central stalk subunits to proton translocation. Component of the F(0) channel, it forms part of the peripheral stalk, linking F(1) to F(0). The sequence is that of ATP synthase subunit b from Dechloromonas aromatica (strain RCB).